We begin with the raw amino-acid sequence, 299 residues long: MPSIDCKRLQKLAPKSPENQSKCISRLRYMVMLDQVESDEGGNSSTRPYVWAVLLNAPPRNADEYIRYVRQGPSPMAQKIQNDVSRTLVVESQFHSRVSQSSLSRLLNAYVWKRGALYVQGMNVLASPFLYACKSENQAFQFFDRLLQNECPLYVLPNIDGVHRGAKLLDKCLEVLDHRLYTYLLSKGLTAKIYALPSILTLSACTAPLSEALTIWDFLFAYGIHLNILCVIAQMFIFREQLIDHPSPMTLLRTFPPLNAKNIMKITILLISKLPPELYNLLARHAWDSEAGVLIDRLT.

The region spanning 41–223 is the Rab-GAP TBC domain; the sequence is GGNSSTRPYV…TIWDFLFAYG (183 aa).

The protein belongs to the BUB2 family.

It localises to the cytoplasm. It is found in the cytoskeleton. The protein localises to the microtubule organizing center. The protein resides in the spindle pole body. Has a dual role in the cell cycle. In mitosis, it is involved in maintenance of cdc2 kinase activity. It is subsequently required for regulation of septum formation. Could be involved in maintenance of cdc2 kinase activity by preventing, directly or indirectly, the degradation of cyclin or the dephosphorylation of 'Thr-167' of cdc2. The protein is Cell division control protein 16 (cdc16) of Schizosaccharomyces pombe (strain 972 / ATCC 24843) (Fission yeast).